A 334-amino-acid polypeptide reads, in one-letter code: Delta(1)-pyrroline-2-carboxylate/Delta(1)-piperideine-2-carboxylate reductase (334 aa).

S44 functions as the Charge relay system in the catalytic mechanism. H45 (proton donor) is an active-site residue. A substrate-binding site is contributed by R49. 117 to 121 (HFSAL) contributes to the NADP(+) binding site. Residue T157 participates in substrate binding. 175-177 (DFA) lines the NADP(+) pocket. 183 to 184 (RG) contacts substrate. The Charge relay system role is filled by E185. NADP(+) is bound by residues 226–227 (HK) and 301–307 (RLPSQRR).

The protein belongs to the LDH2/MDH2 oxidoreductase family. As to quaternary structure, homodimer.

It carries out the reaction L-pipecolate + NADP(+) = Delta(1)-piperideine-2-carboxylate + NADPH + H(+). It catalyses the reaction L-proline + NADP(+) = 1-pyrroline-2-carboxylate + NADPH + H(+). The enzyme catalyses cis-4-hydroxy-L-proline + NADP(+) = Delta(1)-pyrroline-(4S)-hydroxy-2-carboxylate + NADPH + 2 H(+). Its function is as follows. Catalyzes the reduction of both Delta(1)-pyrroline-2-carboxylate (Pyr2C) and Delta(1)-piperideine-2-carboxylate (Pip2C) to L-proline and L-pipecolate, respectively, using NADPH as the electron donor. Cannot use NADH instead of NADPH. Is likely involved in a degradation pathway that converts trans-3-hydroxy-L-proline (t3LHyp) to L-proline, which would allow P.aeruginosa to grow on t3LHyp as a sole carbon source. Can also catalyze the reverse oxidation reactions, albeit at a much lower rate. Is also able to use Delta(1)-pyrroline-(4S)-hydroxy-2-carboxylate (Pyr4SH2C) and cis-4-hydroxy-L-proline (c4LHyp) as substrates, and might be involved in the metabolism of c4LHyp, a compound which is generated by the hydroxylation of free L-proline in bacteria. The protein is Delta(1)-pyrroline-2-carboxylate/Delta(1)-piperideine-2-carboxylate reductase of Pseudomonas aeruginosa (strain ATCC 15692 / DSM 22644 / CIP 104116 / JCM 14847 / LMG 12228 / 1C / PRS 101 / PAO1).